The chain runs to 447 residues: tRNA modification GTPase MnmE (447 aa).

(6S)-5-formyl-5,6,7,8-tetrahydrofolate is bound by residues R24, E81, and K120. Positions 216–371 (GLNVAIAGKP…LRKELSNISG (156 aa)) constitute a TrmE-type G domain. Residue N226 participates in K(+) binding. GTP is bound by residues 226–231 (NAGKSS), 245–251 (TDIAGTT), and 270–273 (DTAG). Mg(2+) is bound at residue S230. Residues T245, I247, and T250 each contribute to the K(+) site. Residue T251 participates in Mg(2+) binding. Position 447 (K447) interacts with (6S)-5-formyl-5,6,7,8-tetrahydrofolate.

It belongs to the TRAFAC class TrmE-Era-EngA-EngB-Septin-like GTPase superfamily. TrmE GTPase family. In terms of assembly, homodimer. Heterotetramer of two MnmE and two MnmG subunits. It depends on K(+) as a cofactor.

The protein resides in the cytoplasm. Functionally, exhibits a very high intrinsic GTPase hydrolysis rate. Involved in the addition of a carboxymethylaminomethyl (cmnm) group at the wobble position (U34) of certain tRNAs, forming tRNA-cmnm(5)s(2)U34. The protein is tRNA modification GTPase MnmE of Vesicomyosocius okutanii subsp. Calyptogena okutanii (strain HA).